Reading from the N-terminus, the 528-residue chain is Chaperonin GroEL, chloroplastic (528 aa).

ATP-binding positions include 29 to 32, 86 to 90, Gly414, 480 to 482, and Asp496; these read TLGP, DGTTT, and DAA.

Belongs to the chaperonin (HSP60) family. As to quaternary structure, forms a cylinder of 14 subunits composed of two heptameric rings stacked back-to-back. Interacts with the co-chaperonin GroES.

Its subcellular location is the plastid. It localises to the chloroplast. It carries out the reaction ATP + H2O + a folded polypeptide = ADP + phosphate + an unfolded polypeptide.. Functionally, together with its co-chaperonin GroES, plays an essential role in assisting protein folding. The GroEL-GroES system forms a nano-cage that allows encapsulation of the non-native substrate proteins and provides a physical environment optimized to promote and accelerate protein folding. This Pyropia yezoensis (Susabi-nori) protein is Chaperonin GroEL, chloroplastic.